A 78-amino-acid polypeptide reads, in one-letter code: Large ribosomal subunit protein bL28 (78 aa).

A disordered region spans residues 1–24 (MSQVCQVTGKRPVTGNNVSHSQRK).

It belongs to the bacterial ribosomal protein bL28 family.

This Chromohalobacter salexigens (strain ATCC BAA-138 / DSM 3043 / CIP 106854 / NCIMB 13768 / 1H11) protein is Large ribosomal subunit protein bL28.